We begin with the raw amino-acid sequence, 243 residues long: 3-deoxy-manno-octulosonate cytidylyltransferase (243 aa).

It belongs to the KdsB family.

The protein resides in the cytoplasm. It carries out the reaction 3-deoxy-alpha-D-manno-oct-2-ulosonate + CTP = CMP-3-deoxy-beta-D-manno-octulosonate + diphosphate. Its pathway is nucleotide-sugar biosynthesis; CMP-3-deoxy-D-manno-octulosonate biosynthesis; CMP-3-deoxy-D-manno-octulosonate from 3-deoxy-D-manno-octulosonate and CTP: step 1/1. In terms of biological role, activates KDO (a required 8-carbon sugar) for incorporation into bacterial lipopolysaccharide in Gram-negative bacteria. This Wigglesworthia glossinidia brevipalpis protein is 3-deoxy-manno-octulosonate cytidylyltransferase.